A 343-amino-acid polypeptide reads, in one-letter code: Trans-enoyl reductase ACTTS2 (343 aa).

An NADP(+)-binding site is contributed by G42 to K45. V128–Q135 contributes to the substrate binding site. NADP(+) is bound by residues S162–T165, S185–N188, and Y203. G268–L272 serves as a coordination point for substrate. V333–S334 provides a ligand contact to NADP(+).

This sequence belongs to the zinc-containing alcohol dehydrogenase family. Monomer.

It participates in mycotoxin biosynthesis. In terms of biological role, trans-enoyl reductase; part of the gene clusters that mediate the biosynthesis of the host-selective toxins (HSTs) ACT-toxins responsible for brown spot of tangerine disease by the tangerine pathotype which affects tangerines and mandarins. ACT-toxins consist of three moieties, 9,10-epoxy-8-hydroxy-9-methyl-decatrienoic acid (EDA), valine and a polyketide. ACT-toxin I is toxic to both citrus and pear; toxin II the 5''-deoxy derivative of ACT-toxin I, is highly toxic to pear and slightly toxic to citrus. On cellular level, ACT-toxins affect plasma membrane of susceptible cells and cause a sudden increase in loss of K(+) after a few minutes of toxin treatment. The acyl-CoA ligase ACTT1, the hydrolase ACTT2, the enoyl-CoA hydratases ACTT3 and ACTT6, and the acyl-CoA synthetase ACTT5 are all involved in the biosynthesis of the AK-, AF- and ACT-toxin common 9,10-epoxy-8-hydroxy-9-methyl-decatrienoic acid (EDA) structural moiety. The exact role of each enzyme, and of additional enzymes identified within the AF-toxin clusters have still to be determined. On the other hand, ACTTS1 to ACTTS4 are specific to the tangerine pathotype. The function of ACTTS3 is to elongate the polyketide chain portion of ACT-toxin that is unique to this toxin. The enoyl-reductase ACTTS2 might complement the missing enoyl-reductase (ER) domain in ACTTS3 in the synthesis of the polyketide portion of ACT-toxin. The roles of the nonribosomal peptide synthetases-related proteins ACTTS1 and ACTTS4 have also still not been elucidated. This is Trans-enoyl reductase ACTTS2 from Alternaria alternata (Alternaria rot fungus).